We begin with the raw amino-acid sequence, 167 residues long: MNASEAVYKAILDSGVDFVTSVPCANLKTVLNYLNDDKDIQHIPVTREEEGIGVCTGAYLGGRKTALLMQNSGLGNSINAIGSLVKVYKIPILIIISHRGDLKEKISAQIPMGQWTKKLLETVEIPYFSPKTPDEAYKLIKDASELSINMEYPVAILLDALYWEHDK.

Belongs to the ComD family. Heterododecamer composed of 6 subunits alpha and 6 subunits beta.

The enzyme catalyses 3-sulfopyruvate + H(+) = sulfoacetaldehyde + CO2. The protein operates within cofactor biosynthesis; coenzyme M biosynthesis; sulfoacetaldehyde from phosphoenolpyruvate and sulfite: step 4/4. In terms of biological role, involved in the biosynthesis of the coenzyme M (2-mercaptoethanesulfonic acid). Catalyzes the decarboxylation of sulfopyruvate to sulfoacetaldehyde. The chain is Sulfopyruvate decarboxylase subunit alpha (comD) from Methanococcus maripaludis (strain DSM 14266 / JCM 13030 / NBRC 101832 / S2 / LL).